A 505-amino-acid polypeptide reads, in one-letter code: Alpha-1-syntrophin (505 aa).

The tract at residues 1-77 (MASGRRAPRT…AEPGAASPPL (77 aa)) is disordered. PH domains follow at residues 6 to 269 (RAPR…AQVN) and 293 to 401 (DIKR…DGCH). Residues 87–170 (RVTVRKADAG…EVVLEVKYMK (84 aa)) form the PDZ domain. 5 positions are modified to phosphoserine: Ser-101, Ser-184, Ser-189, Ser-193, and Ser-200. The disordered stretch occupies residues 180–211 (ASGTSVGWDSPPASPLQRQPSSPGPPPRDLRD). One can recognise an SU domain in the interval 449-505 (PFEKLQMSSDDGASLLFLDFGGAEGEIQLDLHSCPKTMVFIIHSFLSAKVTRLGLLA). Residues 483–505 (PKTMVFIIHSFLSAKVTRLGLLA) are calmodulin-binding.

Belongs to the syntrophin family. As to quaternary structure, monomer and homodimer. Interacts with the dystrophin related protein DTNA; SGCG of the dystrophin glycoprotein complex; NOS1; GRB2; GA; TGFA; MAPK12 and the sodium channel proteins SCN4A and SCN5A. Interacts with the dystrophin protein DMD in a calmodulin dependent manner and with related protein UTRN; SGCA of the dystrophin glycoprotein complex; F-actin; calmodulin and with the other members of the syntrophin family SNTB1 and SNTB2. Interacts with MYOC; regulates muscle hypertrophy. Interacts with DTNB. Post-translationally, phosphorylated by CaM-kinase II. Phosphorylation may inhibit the interaction with DMD.

It localises to the cell membrane. Its subcellular location is the sarcolemma. The protein resides in the cell junction. It is found in the cytoplasm. The protein localises to the cytoskeleton. Its function is as follows. Adapter protein that binds to and probably organizes the subcellular localization of a variety of membrane proteins. May link various receptors to the actin cytoskeleton and the extracellular matrix via the dystrophin glycoprotein complex. Plays an important role in synapse formation and in the organization of UTRN and acetylcholine receptors at the neuromuscular synapse. Binds to phosphatidylinositol 4,5-bisphosphate. The chain is Alpha-1-syntrophin (SNTA1) from Bos taurus (Bovine).